We begin with the raw amino-acid sequence, 127 residues long: Large ribosomal subunit protein bL20 (127 aa).

This sequence belongs to the bacterial ribosomal protein bL20 family.

Its function is as follows. Binds directly to 23S ribosomal RNA and is necessary for the in vitro assembly process of the 50S ribosomal subunit. It is not involved in the protein synthesizing functions of that subunit. This is Large ribosomal subunit protein bL20 from Corynebacterium jeikeium (strain K411).